The primary structure comprises 651 residues: Protein cueball (651 aa).

The N-terminal stretch at 1-21 (MILRLFILLSIITVYLQLSVG) is a signal peptide. Residues 22-540 (IQQQFEFAIT…VCLAPNAWTG (519 aa)) are Extracellular-facing. N-linked (GlcNAc...) asparagine glycans are attached at residues Asn-77, Asn-102, and Asn-114. 3 LDL-receptor class B repeats span residues 115 to 162 (RTIY…DICG), 163 to 207 (RKLY…DQGA), and 208 to 253 (KRIF…TRNA). Asn-183 is a glycosylation site (N-linked (GlcNAc...) asparagine). The tract at residues 290 to 311 (VEGEEGTGAMDDNDIWPVGDFE) is disordered. Asn-324 carries N-linked (GlcNAc...) asparagine glycosylation. EGF-like domains are found at residues 374–408 (QLDE…TRCE), 409–440 (TNEC…YSGE), and 443–480 (EVKK…LRCE). Cystine bridges form between Cys-383-Cys-396, Cys-398-Cys-407, Cys-412-Cys-421, Cys-416-Cys-431, Cys-447-Cys-457, Cys-451-Cys-468, and Cys-470-Cys-479. Asn-482 and Asn-499 each carry an N-linked (GlcNAc...) asparagine glycan. A helical transmembrane segment spans residues 541-561 (SVLMPLMISLILILLLLTIFI). Residues 562–651 (HGLRRLYKPK…LIHNMEDDLY (90 aa)) are Cytoplasmic-facing.

It belongs to the cueball family.

It is found in the cell membrane. Functionally, has a role in spermatogenesis and oogenesis. The protein is Protein cueball of Drosophila willistoni (Fruit fly).